The following is a 1429-amino-acid chain: Alpha-agarase (1429 aa).

The signal sequence occupies residues Met1–Ala26. 2 consecutive CBM6 domains span residues Leu29–Thr161 and Phe211–Thr345. Disordered stretches follow at residues Ser349–Ser400 and Asn474–Gly495. Residues Ser369–Thr378 show a composition bias toward polar residues. A PA14 domain is found at Asn490 to Asn638. The CBM6 3 domain occupies Ile662–Ala793.

The protein belongs to the glycosyl hydrolase 96 family. As to quaternary structure, homodimer. Requires Ca(2+) as cofactor.

The catalysed reaction is Endohydrolysis of 1,3-alpha-L-galactosidic linkages in agarose, yielding agarotetraose as the major product.. In terms of biological role, alpha-agarase. Does not hydrolyze agarotetraose, agarohexaose, kappa-carrageenan, iota-carrageenan or lambda-carrageenan. This Alteromonas agarilytica protein is Alpha-agarase.